Consider the following 239-residue polypeptide: MNSLYTAEGVMDKHSLWQRYVPLVRHEALRLQVRLPASVELDDLLQAGGIGLLNAVERYDALQGTAFTTYAVQRIRGAMLDELRSRDWVPRSVRRNAREVAQAIGQLEQELGRNATETEVAERLGIDIADYRQMLLDTNNSQLFSYDEWREEHGDSIELVTDDHQRENPLQQLLDSNLRQRVMEAIETLPEREKLVLTLYYQEELNLKEIGAVLEVGESRVSQLHSQAIKRLRTKLGKL.

A sigma-70 factor domain-2 region spans residues 16 to 88; that stretch reads LWQRYVPLVR…MLDELRSRDW (73 aa). The Interaction with polymerase core subunit RpoC motif lies at 43–46; the sequence is DLLQ. The segment at 96–166 is sigma-70 factor domain-3; the sequence is NAREVAQAIG…IELVTDDHQR (71 aa). Positions 185–233 are sigma-70 factor domain-4; that stretch reads AIETLPEREKLVLTLYYQEELNLKEIGAVLEVGESRVSQLHSQAIKRLR. Residues 207–226 constitute a DNA-binding region (H-T-H motif); that stretch reads LKEIGAVLEVGESRVSQLHS.

Belongs to the sigma-70 factor family. FliA subfamily.

It is found in the cytoplasm. Sigma factors are initiation factors that promote the attachment of RNA polymerase to specific initiation sites and are then released. This sigma factor controls the expression of flagella-related genes. The protein is RNA polymerase sigma factor FliA of Escherichia coli O157:H7.